Consider the following 134-residue polypeptide: Large-conductance mechanosensitive channel (134 aa).

Transmembrane regions (helical) follow at residues Val-16–Leu-36 and Gly-81–Val-101.

Belongs to the MscL family. Homopentamer.

The protein resides in the cell inner membrane. Functionally, channel that opens in response to stretch forces in the membrane lipid bilayer. May participate in the regulation of osmotic pressure changes within the cell. The chain is Large-conductance mechanosensitive channel from Xylella fastidiosa (strain 9a5c).